Reading from the N-terminus, the 520-residue chain is MSQDIHGEKILILDFGSQYTQLIARRVREAHVYCELHPFDMDLDAIRAFGPKGIILSGGPKSVYEEGAPVVEEALFELGIPVLGICYGMQLMSRHFGGRVVPAGKREYGHATLLPCGSPGPLFDEFFVDGKSPVWMSHGDHVEQVPDGFEVVGCSENAPVCAIQDIARDLYGVQFHPEVNHTPRGEQLLDTFVRQICGCTGQWTPGQIIEDAVVRIREQVGSERVILGLSGGVDSSVAAALIQRAIGDQLVCVFVDNGLLRLDEGDQVMRTFAQNMGVNVIRVNAQDRFMTALAGESDPERKRKIIGNLFVEIFEEESANIEDATWLAQGTIYPDVIESAGAKTGKAHNIKSHHNVGGLPEHMKLKLLEPLRELFKDEVRAIGEELGLPHPMVYRHPFPGPGLGVRILGEVKPEYADILRRADAIYIEELYRTGHYDKISQAFAVFLPVKSVGVMGDGRTYEYVIALRAVETKDFMTAGWYPLPYADMAHISGRIINEVKGVNRVVYDISSKPPATIEWE.

The 194-residue stretch at 9–202 (KILILDFGSQ…VRQICGCTGQ (194 aa)) folds into the Glutamine amidotransferase type-1 domain. The active-site Nucleophile is the cysteine 86. Residues histidine 176 and glutamate 178 contribute to the active site. The 193-residue stretch at 203–395 (WTPGQIIEDA…LGLPHPMVYR (193 aa)) folds into the GMPS ATP-PPase domain. ATP is bound at residue 230–236 (SGGVDSS).

Homodimer.

It catalyses the reaction XMP + L-glutamine + ATP + H2O = GMP + L-glutamate + AMP + diphosphate + 2 H(+). The protein operates within purine metabolism; GMP biosynthesis; GMP from XMP (L-Gln route): step 1/1. Functionally, catalyzes the synthesis of GMP from XMP. The chain is GMP synthase [glutamine-hydrolyzing] from Syntrophotalea carbinolica (strain DSM 2380 / NBRC 103641 / GraBd1) (Pelobacter carbinolicus).